The sequence spans 466 residues: Proline--tRNA ligase (466 aa).

It belongs to the class-II aminoacyl-tRNA synthetase family. ProS type 3 subfamily. In terms of assembly, homodimer.

The protein resides in the cytoplasm. It carries out the reaction tRNA(Pro) + L-proline + ATP = L-prolyl-tRNA(Pro) + AMP + diphosphate. Its function is as follows. Catalyzes the attachment of proline to tRNA(Pro) in a two-step reaction: proline is first activated by ATP to form Pro-AMP and then transferred to the acceptor end of tRNA(Pro). The sequence is that of Proline--tRNA ligase from Picrophilus torridus (strain ATCC 700027 / DSM 9790 / JCM 10055 / NBRC 100828 / KAW 2/3).